The chain runs to 143 residues: Large ribosomal subunit protein uL22c (143 aa).

Belongs to the universal ribosomal protein uL22 family. Part of the 50S ribosomal subunit.

It localises to the plastid. It is found in the chloroplast. Functionally, this protein binds specifically to 23S rRNA. In terms of biological role, the globular domain of the protein is located near the polypeptide exit tunnel on the outside of the subunit, while an extended beta-hairpin is found that lines the wall of the exit tunnel in the center of the 70S ribosome. In Piper cenocladum (Ant piper), this protein is Large ribosomal subunit protein uL22c (rpl22).